A 161-amino-acid polypeptide reads, in one-letter code: Cyclic pyranopterin monophosphate synthase (161 aa).

Substrate contacts are provided by residues 73 to 75 (LCH) and 110 to 111 (ME). Residue Asp-125 is part of the active site.

This sequence belongs to the MoaC family. In terms of assembly, homohexamer; trimer of dimers.

The catalysed reaction is (8S)-3',8-cyclo-7,8-dihydroguanosine 5'-triphosphate = cyclic pyranopterin phosphate + diphosphate. The protein operates within cofactor biosynthesis; molybdopterin biosynthesis. Its function is as follows. Catalyzes the conversion of (8S)-3',8-cyclo-7,8-dihydroguanosine 5'-triphosphate to cyclic pyranopterin monophosphate (cPMP). The chain is Cyclic pyranopterin monophosphate synthase from Pseudomonas savastanoi pv. phaseolicola (strain 1448A / Race 6) (Pseudomonas syringae pv. phaseolicola (strain 1448A / Race 6)).